The primary structure comprises 393 residues: Diphosphomevalonate decarboxylase (393 aa).

(R)-5-diphosphomevalonate is bound by residues 21–24 (YWGK), Arg77, 156–161 (SGSACR), and Thr212.

It belongs to the diphosphomevalonate decarboxylase family. In terms of assembly, homodimer.

The protein localises to the cytoplasm. The protein resides in the nucleus. The enzyme catalyses (R)-5-diphosphomevalonate + ATP = isopentenyl diphosphate + ADP + phosphate + CO2. Its pathway is isoprenoid biosynthesis; isopentenyl diphosphate biosynthesis via mevalonate pathway; isopentenyl diphosphate from (R)-mevalonate: step 3/3. Diphosphomevalonate decarboxylase; part of the second module of ergosterol biosynthesis pathway that includes the middle steps of the pathway. Mvd1 converts diphosphomevalonate into isopentenyl diphosphate. The second module is carried out in the vacuole and involves the formation of farnesyl diphosphate, which is also an important intermediate in the biosynthesis of ubiquinone, dolichol, heme and prenylated proteins. Activity by the mevalonate kinase erg12 first converts mevalonate into 5-phosphomevalonate. 5-phosphomevalonate is then further converted to 5-diphosphomevalonate by the phosphomevalonate kinase erg8. The diphosphomevalonate decarboxylase mvd1 then produces isopentenyl diphosphate. The isopentenyl-diphosphate delta-isomerase idi1 then catalyzes the 1,3-allylic rearrangement of the homoallylic substrate isopentenyl (IPP) to its highly electrophilic allylic isomer, dimethylallyl diphosphate (DMAPP). Finally the farnesyl diphosphate synthase fps1 catalyzes the sequential condensation of isopentenyl pyrophosphate with dimethylallyl pyrophosphate, and then with the resultant geranylpyrophosphate to the ultimate product farnesyl pyrophosphate. The protein is Diphosphomevalonate decarboxylase (mvd1) of Schizosaccharomyces pombe (strain 972 / ATCC 24843) (Fission yeast).